The sequence spans 1338 residues: Centrosomal P4.1-associated protein (1338 aa).

Disordered stretches follow at residues 78–99 (QKLE…HTGF) and 190–211 (GLSL…TTTG). 2 positions are modified to phosphoserine: serine 260 and serine 317. The segment at 320-395 (VANIEERPIK…FTNAKSKFQK (76 aa)) is alpha/beta-tubulin binding. Disordered regions lie at residues 387 to 415 (TNAK…PLFK), 437 to 480 (PILK…QTGK), and 522 to 552 (QGKD…ESES). Residues 401–410 (LVTNQSTSED) are compositionally biased toward polar residues. Serine 541 bears the Phosphoserine mark. Basic and acidic residues predominate over residues 542 to 551 (PIRETMKESE). Phosphoserine; by PLK2 is present on residues serine 590 and serine 596. Disordered stretches follow at residues 612–790 (HRMS…LSMS), 846–903 (VKRG…DNAR), and 1088–1158 (TQVE…HPDG). Positions 636–651 (NRSEDLDHTAREKESE) are enriched in basic and acidic residues. Residues 680 to 690 (QKSTSENQTEW) show a composition bias toward polar residues. Residues 718-765 (STEDRERGISSREDSPQVCDDKGPFKDTRTQEDKRRDVDLDLSDKDYS) show a composition bias toward basic and acidic residues. Residue serine 760 is modified to Phosphoserine. Residues 781–790 (PSRSSSLSMS) show a composition bias toward low complexity. Residues 896 to 1338 (QPPGDNARSQ…EGNVLMDTEL (443 aa)) form an interaction with STIL region.

Belongs to the TCP10 family. In terms of assembly, forms homodimers. Associates with microtubules plus ends; binds to beta-tubulin subunits exposed on microtubule outer surface at its distal tip; also associates with microtubule lattice. Associated with the gamma-tubulin complex. Interacts with the head domain of EPB41. Interacts with LYST. Interacts with CEP152 (via C-terminus). Interacts with STIL. Forms a complex with STIL and SASS6. Post-translationally, phosphorylation at Ser-590 and Ser-596 by PLK2 is required for procentriole formation and centriole elongation. Phosphorylation by PLK2 oscillates during the cell cycle: it increases at G1/S transition and decreases during the exit from mitosis. Phosphorylation at Ser-596 is also mediated by PLK4 but is not a critical step in PLK4 function in procentriole assembly.

Its subcellular location is the cytoplasm. It localises to the cytoskeleton. The protein resides in the microtubule organizing center. The protein localises to the centrosome. It is found in the centriole. Functionally, plays an important role in cell division and centrosome function by participating in centriole duplication. Inhibits microtubule nucleation from the centrosome. Involved in the regulation of slow processive growth of centriolar microtubules. Acts as microtubule plus-end tracking protein that stabilizes centriolar microtubules and inhibits microtubule polymerization and extension from the distal ends of centrioles. Required for centriole elongation and for STIL-mediated centriole amplification. Required for the recruitment of CEP295 to the proximal end of new-born centrioles at the centriolar microtubule wall during early S phase in a PLK4-dependent manner. May be involved in the control of centriolar-microtubule growth by acting as a regulator of tubulin release. The polypeptide is Centrosomal P4.1-associated protein (CPAP) (Pan troglodytes (Chimpanzee)).